Here is an 86-residue protein sequence, read N- to C-terminus: Small ribosomal subunit protein bS20 (86 aa).

The segment covering 1-27 (MANSKSAKKRATQAERRRQHNASRRSM) has biased composition (basic residues). Residues 1 to 28 (MANSKSAKKRATQAERRRQHNASRRSMM) form a disordered region.

The protein belongs to the bacterial ribosomal protein bS20 family.

Binds directly to 16S ribosomal RNA. This chain is Small ribosomal subunit protein bS20, found in Aliivibrio fischeri (strain MJ11) (Vibrio fischeri).